The sequence spans 438 residues: Aspartate--tRNA(Asp/Asn) ligase (438 aa).

Glu176 is an L-aspartate binding site. The segment at 198 to 201 (QLYK) is aspartate. An L-aspartate-binding site is contributed by Arg220. Residues 220 to 222 (RAE), 228 to 230 (RHL), and Glu361 each bind ATP. Glu361 and Ser364 together coordinate Mg(2+). 2 residues coordinate L-aspartate: Ser364 and Arg368. 409 to 412 (GADR) contributes to the ATP binding site.

It belongs to the class-II aminoacyl-tRNA synthetase family. Type 2 subfamily. As to quaternary structure, homodimer. The cofactor is Mg(2+).

The protein resides in the cytoplasm. It carries out the reaction tRNA(Asx) + L-aspartate + ATP = L-aspartyl-tRNA(Asx) + AMP + diphosphate. Aspartyl-tRNA synthetase with relaxed tRNA specificity since it is able to aspartylate not only its cognate tRNA(Asp) but also tRNA(Asn). Reaction proceeds in two steps: L-aspartate is first activated by ATP to form Asp-AMP and then transferred to the acceptor end of tRNA(Asp/Asn). The polypeptide is Aspartate--tRNA(Asp/Asn) ligase (Methanococcus maripaludis (strain C7 / ATCC BAA-1331)).